A 258-amino-acid polypeptide reads, in one-letter code: tRNA pseudouridine synthase A (258 aa).

Asp-52 functions as the Nucleophile in the catalytic mechanism. Tyr-110 provides a ligand contact to substrate.

Belongs to the tRNA pseudouridine synthase TruA family. In terms of assembly, homodimer.

It catalyses the reaction uridine(38/39/40) in tRNA = pseudouridine(38/39/40) in tRNA. In terms of biological role, formation of pseudouridine at positions 38, 39 and 40 in the anticodon stem and loop of transfer RNAs. The protein is tRNA pseudouridine synthase A of Francisella tularensis subsp. mediasiatica (strain FSC147).